The chain runs to 139 residues: Putative pre-16S rRNA nuclease (139 aa).

This sequence belongs to the YqgF nuclease family.

Its subcellular location is the cytoplasm. In terms of biological role, could be a nuclease involved in processing of the 5'-end of pre-16S rRNA. The chain is Putative pre-16S rRNA nuclease from Streptococcus pyogenes serotype M49 (strain NZ131).